Reading from the N-terminus, the 233-residue chain is Large ribosomal subunit protein uL1 (233 aa).

The protein belongs to the universal ribosomal protein uL1 family. In terms of assembly, part of the 50S ribosomal subunit.

Functionally, binds directly to 23S rRNA. The L1 stalk is quite mobile in the ribosome, and is involved in E site tRNA release. Protein L1 is also a translational repressor protein, it controls the translation of the L11 operon by binding to its mRNA. In Shewanella piezotolerans (strain WP3 / JCM 13877), this protein is Large ribosomal subunit protein uL1.